Consider the following 173-residue polypeptide: NADH-quinone oxidoreductase subunit B 2 (173 aa).

4 residues coordinate [4Fe-4S] cluster: C42, C43, C107, and C137.

The protein belongs to the complex I 20 kDa subunit family. NDH-1 is composed of 14 different subunits. Subunits NuoB, C, D, E, F, and G constitute the peripheral sector of the complex. [4Fe-4S] cluster is required as a cofactor.

The protein resides in the cell inner membrane. It carries out the reaction a quinone + NADH + 5 H(+)(in) = a quinol + NAD(+) + 4 H(+)(out). NDH-1 shuttles electrons from NADH, via FMN and iron-sulfur (Fe-S) centers, to quinones in the respiratory chain. Couples the redox reaction to proton translocation (for every two electrons transferred, four hydrogen ions are translocated across the cytoplasmic membrane), and thus conserves the redox energy in a proton gradient. This Anaeromyxobacter dehalogenans (strain 2CP-C) protein is NADH-quinone oxidoreductase subunit B 2.